The chain runs to 280 residues: Aquaporin PIP2-7 (280 aa).

An N-acetylmethionine modification is found at Met-1. Over 1–38 (MSKEVSEEGKTHHGKDYVDPPPAPLLDMGELKSWSFYR) the chain is Cytoplasmic. An N6,N6-dimethyllysine modification is found at Lys-3. A helical membrane pass occupies residues 39–59 (ALIAEFIATLLFLYVTVATVI). The Extracellular segment spans residues 60–69 (GHKKQTGPCD). The helical transmembrane segment at 70 to 90 (GVGLLGIAWAFGGMIFVLVYC) threads the bilayer. The Cytoplasmic portion of the chain corresponds to 91-118 (TAGISGGHINPAVTFGLFLARKVSLVRA). Residues 100–102 (NPA) carry the NPA 1 motif. Residues 119 to 139 (LGYMIAQCLGAICGVGFVKAF) form a helical membrane-spanning segment. The Extracellular segment spans residues 140–160 (MKTPYNTLGGGANTVADGYSK). A helical transmembrane segment spans residues 161 to 181 (GTALGAEIIGTFVLVYTVFSA). The Cytoplasmic portion of the chain corresponds to 182 to 192 (TDPKRSARDSH). A helical membrane pass occupies residues 193–213 (IPVLAPLPIGFAVFMVHLATI). The Extracellular portion of the chain corresponds to 214 to 242 (PITGTGINPARSFGAAVIYNNEKAWDDQW). The NPA 2 signature appears at 221 to 223 (NPA). A helical transmembrane segment spans residues 243 to 263 (IFWVGPFLGALAAAAYHQYIL). Residues 264 to 280 (RASAIKALGSFRSNATN) are Cytoplasmic-facing. 2 positions are modified to phosphoserine: Ser-273 and Ser-276. Thr-279 is subject to Phosphothreonine.

The protein belongs to the MIP/aquaporin (TC 1.A.8) family. PIP (TC 1.A.8.11) subfamily. As to quaternary structure, interacts with SYP61 and SYP121 in trafficking vesicles and at the plasma membrane. Highly expressed in flowers, expressed at low levels in siliques, and at low level in leaves and roots. Highly levels in elongating cells in both roots and shoots.

It is found in the cell membrane. In terms of biological role, water channel required to facilitate the transport of water across cell membrane. May be involved in the osmoregulation in plants under high osmotic stress such as under a high salt condition. This chain is Aquaporin PIP2-7, found in Arabidopsis thaliana (Mouse-ear cress).